Here is a 268-residue protein sequence, read N- to C-terminus: MSSRWNRTIYVGNLPGDIRKCEVEDLFYKYGPIVDIDLKIPPRPPGYAFVEFEDPRDADDAIYGRDGYDFDGCRLRVEIAHGGRRFSPSVDRYSSSYSASRAPSRRSDYRVLVTGLPPSASWQDLKDHMRKAGDVCFSEVFPDRKGMSGVVDYSNYDDMKYAIRKLDATEFRNAFSSAYIRVREYESRSVSRSPDDSKSYRSRSRSRGPSCSYSSKSRSVSPARSISPRSRPLSRSRSLYSSVSRSQSRSKSRSRSRSNSPVSPVISG.

RRM domains are found at residues 7–82 (RTIY…IAHG) and 109–187 (YRVL…EYES). Residues 186–199 (ESRSVSRSPDDSKS) are compositionally biased toward basic and acidic residues. Residues 186-268 (ESRSVSRSPD…NSPVSPVISG (83 aa)) form a disordered region. A phosphoserine mark is found at Ser-193, Ser-210, Ser-212, Ser-214, Ser-219, Ser-221, Ser-227, Ser-236, Ser-246, Ser-256, and Ser-260. The span at 207–247 (RGPSCSYSSKSRSVSPARSISPRSRPLSRSRSLYSSVSRSQ) shows a compositional bias: low complexity. Residues 257–268 (RSNSPVSPVISG) are compositionally biased toward low complexity.

It belongs to the splicing factor SR family. SR subfamily. In terms of assembly, component of the spliceosome. Interacts with SNRNP35, CYP59 and CYP63. Post-translationally, phosphorylated. As to expression, ubiquitous.

It localises to the nucleus speckle. Its subcellular location is the nucleus. The protein localises to the nucleoplasm. The protein resides in the cytoplasm. Its function is as follows. Regulatory splicing factor that modulates alternative splicing and gene expression in specific cell types. Autoregulates its own expression. Probably involved in intron recognition and spliceosome assembly. This chain is Serine/arginine-rich splicing factor SR30 (SR30), found in Arabidopsis thaliana (Mouse-ear cress).